Reading from the N-terminus, the 450-residue chain is MSHSACPKPATARHSQALTGEIRIPGDKSISHRSFMFGGLASGKTRITGLLEGEDVINTGRAMQAMGARIRKEGDVWIINGVGNGCLLQPEAPLDFGNAGTGARLTMGLVGTYDMKTSFIGDASLSKRPMGRVLNPLREMGVQVEAAEGDRMPLTLIGPRTANPIAYRVPMASAQVKSAVLLAGLNTPGVTTVIEPVMTRDHTEKMLQGFGADLTVETDKDGVRHIRIVGQGKLTGQTIDVPGDPSSTAFPLVAALLVEGSDVTIRNVLMNPTRTGLILTLQEMGADIEIIDPRLAGGEDVADLRVKASKLKGVVVPPERAPSMIDEYPVLAIAASFAEGETVMDGLDELRVKESDRLAAVARGLEANGVDCTEGEMSLTVRGRPGGKGLGGGTVGTHLDHRIAMSFLVMGLASEKPVTVDDSTMIATSFPEFMGMMAGLGAKIAESGAE.

Residues Lys-28, Ser-29, and Arg-33 each contribute to the 3-phosphoshikimate site. Lys-28 serves as a coordination point for phosphoenolpyruvate. The phosphoenolpyruvate site is built by Gly-100 and Arg-128. Residues Ser-173, Gln-175, Asp-326, and Lys-353 each contribute to the 3-phosphoshikimate site. Gln-175 contributes to the phosphoenolpyruvate binding site. The active-site Proton acceptor is the Asp-326. The phosphoenolpyruvate site is built by Arg-357 and Arg-402.

Belongs to the EPSP synthase family. As to quaternary structure, monomer.

It localises to the cytoplasm. It catalyses the reaction 3-phosphoshikimate + phosphoenolpyruvate = 5-O-(1-carboxyvinyl)-3-phosphoshikimate + phosphate. The protein operates within metabolic intermediate biosynthesis; chorismate biosynthesis; chorismate from D-erythrose 4-phosphate and phosphoenolpyruvate: step 6/7. Functionally, catalyzes the transfer of the enolpyruvyl moiety of phosphoenolpyruvate (PEP) to the 5-hydroxyl of shikimate-3-phosphate (S3P) to produce enolpyruvyl shikimate-3-phosphate and inorganic phosphate. The sequence is that of 3-phosphoshikimate 1-carboxyvinyltransferase from Brucella melitensis biotype 1 (strain ATCC 23456 / CCUG 17765 / NCTC 10094 / 16M).